Here is a 354-residue protein sequence, read N- to C-terminus: Serum paraoxonase/lactonase 3 (354 aa).

Cys-42 and Cys-352 are disulfide-bonded. Asn-50 carries an N-linked (GlcNAc...) asparagine glycan. Residues Glu-53 and Asp-54 each contribute to the Ca(2+) site. His-114 serves as the catalytic Proton acceptor. Ca(2+) is bound at residue Ile-116. Ser-165 is modified (phosphoserine). Ca(2+) contacts are provided by Asn-167, Asp-168, Asn-223, Asp-268, and Asn-269. Asn-269 and Asn-323 each carry an N-linked (GlcNAc...) asparagine glycan.

The protein belongs to the paraoxonase family. In terms of assembly, homodimer. Requires Ca(2+) as cofactor. In terms of processing, glycosylated. Post-translationally, the signal sequence is not cleaved.

The protein resides in the secreted. It localises to the extracellular space. The catalysed reaction is a phenyl acetate + H2O = a phenol + acetate + H(+). It carries out the reaction An aryl dialkyl phosphate + H2O = dialkyl phosphate + an aryl alcohol.. It catalyses the reaction an N-acyl-L-homoserine lactone + H2O = an N-acyl-L-homoserine + H(+). Has low activity towards the organophosphate paraxon and aromatic carboxylic acid esters. Rapidly hydrolyzes lactones such as statin prodrugs (e.g. lovastatin). Hydrolyzes aromatic lactones and 5- or 6-member ring lactones with aliphatic substituents but not simple lactones or those with polar substituents. The polypeptide is Serum paraoxonase/lactonase 3 (Pon3) (Mus musculus (Mouse)).